The chain runs to 222 residues: Protein DEHYDRATION-INDUCED 19 homolog 6 (222 aa).

Phosphoserine is present on Ser-116.

The protein belongs to the Di19 family. Post-translationally, phosphorylated in vitro by CPK3 or CPK11. As to expression, expressed in seedlings, roots, leaves, stems, flowers and siliques.

The protein localises to the nucleus. The polypeptide is Protein DEHYDRATION-INDUCED 19 homolog 6 (DI19-6) (Arabidopsis thaliana (Mouse-ear cress)).